The following is a 142-amino-acid chain: Large ribosomal subunit protein uL11 (142 aa).

Belongs to the universal ribosomal protein uL11 family. Part of the ribosomal stalk of the 50S ribosomal subunit. Interacts with L10 and the large rRNA to form the base of the stalk. L10 forms an elongated spine to which L12 dimers bind in a sequential fashion forming a multimeric L10(L12)X complex. One or more lysine residues are methylated.

Forms part of the ribosomal stalk which helps the ribosome interact with GTP-bound translation factors. The polypeptide is Large ribosomal subunit protein uL11 (Rhodopseudomonas palustris (strain HaA2)).